The chain runs to 407 residues: Phosphonoacetate hydrolase (407 aa).

Residues aspartate 25, threonine 64, aspartate 202, histidine 206, aspartate 241, histidine 242, and histidine 368 each contribute to the Zn(2+) site. Residues threonine 64 and aspartate 202 each coordinate substrate. 2 residues coordinate substrate: histidine 242 and histidine 368.

Belongs to the alkaline phosphatase family. PhnA subfamily. As to quaternary structure, homodimer. The cofactor is Zn(2+).

The enzyme catalyses phosphonoacetate + H2O = acetate + phosphate + H(+). In terms of biological role, specifically hydrolyzes phosphonoacetate. Does not have activity on other organophosphonates or acetates. The protein is Phosphonoacetate hydrolase of Pseudomonas putida (Arthrobacter siderocapsulatus).